Consider the following 474-residue polypeptide: Glutamate--tRNA ligase (474 aa).

The short motif at 11 to 21 (PSPTGFLHIGG) is the 'HIGH' region element. The 'KMSKS' region motif lies at 240 to 244 (KLSKR). Lysine 243 serves as a coordination point for ATP.

Belongs to the class-I aminoacyl-tRNA synthetase family. Glutamate--tRNA ligase type 1 subfamily. As to quaternary structure, monomer.

It localises to the cytoplasm. It catalyses the reaction tRNA(Glu) + L-glutamate + ATP = L-glutamyl-tRNA(Glu) + AMP + diphosphate. In terms of biological role, catalyzes the attachment of glutamate to tRNA(Glu) in a two-step reaction: glutamate is first activated by ATP to form Glu-AMP and then transferred to the acceptor end of tRNA(Glu). The protein is Glutamate--tRNA ligase of Nitrobacter hamburgensis (strain DSM 10229 / NCIMB 13809 / X14).